The sequence spans 99 residues: NADH-quinone oxidoreductase subunit K (99 aa).

The next 3 membrane-spanning stretches (helical) occupy residues 3 to 23 (PDNYLYLSALLFTIGAAGVLL), 28 to 48 (IVMFMCVELMLNAGNLAFVTF), and 59 to 79 (VVAFFTMVVAACEVVIGLAII).

Belongs to the complex I subunit 4L family. NDH-1 is composed of 14 different subunits. Subunits NuoA, H, J, K, L, M, N constitute the membrane sector of the complex.

Its subcellular location is the cell membrane. It catalyses the reaction a quinone + NADH + 5 H(+)(in) = a quinol + NAD(+) + 4 H(+)(out). Its function is as follows. NDH-1 shuttles electrons from NADH, via FMN and iron-sulfur (Fe-S) centers, to quinones in the respiratory chain. The immediate electron acceptor for the enzyme in this species is believed to be a menaquinone. Couples the redox reaction to proton translocation (for every two electrons transferred, four hydrogen ions are translocated across the cytoplasmic membrane), and thus conserves the redox energy in a proton gradient. In Mycolicibacterium gilvum (strain PYR-GCK) (Mycobacterium gilvum (strain PYR-GCK)), this protein is NADH-quinone oxidoreductase subunit K.